The chain runs to 657 residues: Pyoverdine export ATP-binding/permease protein PvdT (657 aa).

The ABC transporter domain maps to 6 to 245 (IDLRNIRKSY…LSANAGALQA (240 aa)). 43–50 (GASGSGKS) lines the ATP pocket. Helical transmembrane passes span 285 to 305 (ALTL…LAVG), 532 to 552 (LSLM…IGVM), 590 to 610 (LSVV…GILI), and 620 to 640 (LAAV…FGFM).

It belongs to the ABC transporter superfamily. Macrolide exporter (TC 3.A.1.122) family. Part of the tripartite efflux system PvdRT-OpmQ, which is composed of an inner membrane component with both ATPase and permease domains, PvdT, a periplasmic membrane fusion protein, PvdR, and an outer membrane component, OpmQ.

It localises to the cell inner membrane. In terms of biological role, part of the tripartite efflux system PvdRT-OpmQ required for the secretion into the extracellular milieu of the siderophore pyoverdine (PVD), which is involved in iron acquisition. This subunit binds PVD and drives its secretion by hydrolyzing ATP. The system is responsible for export of newly synthesized PVD after the final steps of biosynthesis have taken place in the periplasm. It is also responsible for recycling of PVD after internalization of ferri-PVD into the periplasm by the outer-membrane receptor FpvA and release of iron from PVD, thus making PVD available for new cycles of iron uptake. In Pseudomonas fluorescens (strain ATCC BAA-477 / NRRL B-23932 / Pf-5), this protein is Pyoverdine export ATP-binding/permease protein PvdT.